The primary structure comprises 399 residues: Subtilisin-like protease 4 (399 aa).

Residues 1 to 19 (MVCLKTLSVFLAAFAAADA) form the signal peptide. The propeptide occupies 20-118 (RAVFKTQGHK…VEQDQVVRIS (99 aa)). An Inhibitor I9 domain is found at 38–117 (YIVVMKDGVS…YVEQDQVVRI (80 aa)). The Peptidase S8 domain maps to 128 to 399 (SWGLGRVSHR…NRLLYNGSGQ (272 aa)). Residues Asp160 and His191 each act as charge relay system in the active site. Residues Asn252 and Asn308 are each glycosylated (N-linked (GlcNAc...) asparagine). Ser346 functions as the Charge relay system in the catalytic mechanism. Asn395 is a glycosylation site (N-linked (GlcNAc...) asparagine).

Belongs to the peptidase S8 family.

The protein resides in the secreted. Its function is as follows. Secreted subtilisin-like serine protease with keratinolytic activity that contributes to pathogenicity. The polypeptide is Subtilisin-like protease 4 (SUB4) (Arthroderma benhamiae (strain ATCC MYA-4681 / CBS 112371) (Trichophyton mentagrophytes)).